We begin with the raw amino-acid sequence, 125 residues long: MAITKEDILNAVAEMSVMDVCDLVKMMEDKFGVSAAAAVAVAAGPVAGPAEAAEEKTEFDVVLVDAGSNKIAAIKAVRGATGLGLKEAKDAVEGTPFTVKEAASKEEAEVLKKQLEEAGAKVELK.

It belongs to the bacterial ribosomal protein bL12 family. In terms of assembly, homodimer. Part of the ribosomal stalk of the 50S ribosomal subunit. Forms a multimeric L10(L12)X complex, where L10 forms an elongated spine to which 2 to 4 L12 dimers bind in a sequential fashion. Binds GTP-bound translation factors.

In terms of biological role, forms part of the ribosomal stalk which helps the ribosome interact with GTP-bound translation factors. Is thus essential for accurate translation. This is Large ribosomal subunit protein bL12 from Francisella tularensis subsp. tularensis (strain SCHU S4 / Schu 4).